A 582-amino-acid chain; its full sequence is Vesicular glutamate transporter 2 (582 aa).

At 1–71 (MESVKQRILA…CTCFGLPRRY (71 aa)) the chain is on the cytoplasmic side. A helical membrane pass occupies residues 72 to 92 (IIAIMSGLGFCISFGIRCNLG). At 93–125 (VAIVDMVNNSTIHRGGKVIKEKAKFNWDPETVG) the chain is on the vesicular side. Asn-100 and Asn-101 each carry an N-linked (GlcNAc...) asparagine glycan. The helical transmembrane segment at 126-146 (MIHGSFFWGYIITQIPGGYIA) threads the bilayer. At 147–148 (SR) the chain is on the cytoplasmic side. Residues 149–169 (LAANRVFGAAILLTSTLNMLI) traverse the membrane as a helical segment. Over 170-177 (PSAARVHY) the chain is Vesicular. Residues 178-198 (GCVIFVRILQGLVEGVTYPAC) traverse the membrane as a helical segment. Residues 199–216 (HGIWSKWAPPLERSRLAT) are Cytoplasmic-facing. A helical transmembrane segment spans residues 217-237 (TSFCGSYAGAVIAMPLAGILV). Over 238 to 244 (QYTGWSS) the chain is Vesicular. The chain crosses the membrane as a helical span at residues 245-265 (VFYVYGSFGMVWYMFWLLVSY). Residues 266–310 (ESPAKHPTITDEERRYIEESIGESANLLGAMEKFKTPWRKFFTSM) are Cytoplasmic-facing. A helical transmembrane segment spans residues 311–331 (PVYAIIVANFCRSWTFYLLLI). Topologically, residues 332 to 349 (SQPAYFEEVFGFEISKVG) are vesicular. A helical transmembrane segment spans residues 350 to 370 (MLSAVPHLVMTIIVPIGGQIA). Topologically, residues 371-386 (DFLRSKQILSTTTVRK) are cytoplasmic. Residues 387-407 (IMNCGGFGMEATLLLVVGYSH) traverse the membrane as a helical segment. Residues 408 to 409 (TR) are Vesicular-facing. The helical transmembrane segment at 410-430 (GVAISFLVLAVGFSGFAISGF) threads the bilayer. The Cytoplasmic segment spans residues 431-443 (NVNHLDIAPRYAS). The helical transmembrane segment at 444–464 (ILMGISDGVGTLSGMVCPIIV) threads the bilayer. Residues 465–477 (GAMTKNKSREEWQ) are Vesicular-facing. Asn-470 carries an N-linked (GlcNAc...) asparagine glycan. Residues 478–498 (YVFLIAALVHYGGVIFYALFA) traverse the membrane as a helical segment. Topologically, residues 499–582 (SGEKQPWADP…YTYKDRDDYS (84 aa)) are cytoplasmic.

It belongs to the major facilitator superfamily. Sodium/anion cotransporter family. VGLUT subfamily. In terms of tissue distribution, expressed in brain. Expressed in hippocampal neurons (at protein level).

It localises to the cytoplasmic vesicle. The protein resides in the secretory vesicle. It is found in the synaptic vesicle membrane. Its subcellular location is the synapse. The protein localises to the synaptosome. It localises to the cell membrane. It catalyses the reaction L-glutamate(out) = L-glutamate(in). The catalysed reaction is K(+)(in) + H(+)(out) = K(+)(out) + H(+)(in). The enzyme catalyses 3 Na(+)(out) + phosphate(out) = 3 Na(+)(in) + phosphate(in). It carries out the reaction phosphate(in) = phosphate(out). It catalyses the reaction chloride(in) = chloride(out). With respect to regulation, chloride channel activity is allosterically activated by lumenal H(+) and Cl(-) leading to synaptic vesicles acidification. The L-glutamate transport activity is allosterically activated by lumenal H(+) and Cl(-). The allosteric requirement for H(+) efficiently prevents non-vesicular efflux across the plasma membrane. The L-glutamate uniporter activity exhibits a biphasic dependence on chloride concentration. Multifunctional transporter that transports L-glutamate as well as multiple ions such as chloride, proton, potassium, sodium and phosphate. At the synaptic vesicle membrane, mainly functions as a uniporter which transports preferentially L-glutamate but also, phosphate from the cytoplasm into synaptic vesicles at presynaptic nerve terminals of excitatory neural cells. The L-glutamate or phosphate uniporter activity is electrogenic and is driven by the proton electrochemical gradient, mainly by the electrical gradient established by the vacuolar H(+)-ATPase across the synaptic vesicle membrane. In addition, functions as a chloride channel that allows a chloride permeation through the synaptic vesicle membrane therefore affects the proton electrochemical gradient and promotes synaptic vesicles acidification. Moreover, functions as a vesicular K(+)/H(+) antiport allowing to maintain the electrical gradient and to decrease chemical gradient and therefore sustain vesicular glutamate uptake. The vesicular H(+)/H(+) antiport activity is electroneutral. At the plasma membrane, following exocytosis, functions as a symporter of Na(+) and phosphate from the extracellular space to the cytoplasm allowing synaptic phosphate homeostasis regulation. The symporter activity is driven by an inside negative membrane potential and is electrogenic. Also involved in the regulation of retinal hyaloid vessel regression during postnatal development. May also play a role in the endocrine glutamatergic system of other tissues such as pineal gland and pancreas. The sequence is that of Vesicular glutamate transporter 2 from Mus musculus (Mouse).